Reading from the N-terminus, the 608-residue chain is ABC transporter ATP-binding protein RamB (608 aa).

Helical transmembrane passes span Gly25–Gly45, Leu66–Phe86, Gly141–Leu161, Ala166–Leu186, and Ala253–Leu273. Residues Leu30 to Pro296 form the ABC transmembrane type-1 domain. The disordered stretch occupies residues Gly321 to Ser362. Residues Pro324 to Pro336 are compositionally biased toward acidic residues. A compositionally biased stretch (low complexity) spans Glu351–Ser362. Residues Val376–His605 enclose the ABC transporter domain. Gly410–Ser417 contributes to the ATP binding site.

The protein belongs to the ABC transporter superfamily.

The protein resides in the cell membrane. Its function is as follows. Probably involved in exporting SapB from the cell. Expression of the ram locus (ramA, ramB and ramR) induces rapid aerial mycelium formation in S.lividans. This chain is ABC transporter ATP-binding protein RamB, found in Streptomyces coelicolor (strain ATCC BAA-471 / A3(2) / M145).